The sequence spans 129 residues: Cytochrome c oxidase subunit 5B, mitochondrial (129 aa).

The transit peptide at 1–31 directs the protein to the mitochondrion; the sequence is MASRLLRGVGALASQALRARGPNGVSVVRSM. An N6-acetyllysine mark is found at Lys68 and Lys86. Residues Cys91, Cys93, Cys113, and Cys116 each coordinate Zn(2+). Lys121 is subject to N6-acetyllysine.

The protein belongs to the cytochrome c oxidase subunit 5B family. In terms of assembly, component of the cytochrome c oxidase (complex IV, CIV), a multisubunit enzyme composed of 14 subunits. The complex is composed of a catalytic core of 3 subunits MT-CO1, MT-CO2 and MT-CO3, encoded in the mitochondrial DNA, and 11 supernumerary subunits COX4I1 (or COX4I2), COX5A, COX5B, COX6A2 (or COX6A1), COX6B1 (or COX6B2), COX6C, COX7A1 (or COX7A2), COX7B, COX7C, COX8B and NDUFA4, which are encoded in the nuclear genome. The complex exists as a monomer or a dimer and forms supercomplexes (SCs) in the inner mitochondrial membrane with NADH-ubiquinone oxidoreductase (complex I, CI) and ubiquinol-cytochrome c oxidoreductase (cytochrome b-c1 complex, complex III, CIII), resulting in different assemblies (supercomplex SCI(1)III(2)IV(1) and megacomplex MCI(2)III(2)IV(2)).

It localises to the mitochondrion inner membrane. It functions in the pathway energy metabolism; oxidative phosphorylation. Functionally, component of the cytochrome c oxidase, the last enzyme in the mitochondrial electron transport chain which drives oxidative phosphorylation. The respiratory chain contains 3 multisubunit complexes succinate dehydrogenase (complex II, CII), ubiquinol-cytochrome c oxidoreductase (cytochrome b-c1 complex, complex III, CIII) and cytochrome c oxidase (complex IV, CIV), that cooperate to transfer electrons derived from NADH and succinate to molecular oxygen, creating an electrochemical gradient over the inner membrane that drives transmembrane transport and the ATP synthase. Cytochrome c oxidase is the component of the respiratory chain that catalyzes the reduction of oxygen to water. Electrons originating from reduced cytochrome c in the intermembrane space (IMS) are transferred via the dinuclear copper A center (CU(A)) of subunit 2 and heme A of subunit 1 to the active site in subunit 1, a binuclear center (BNC) formed by heme A3 and copper B (CU(B)). The BNC reduces molecular oxygen to 2 water molecules using 4 electrons from cytochrome c in the IMS and 4 protons from the mitochondrial matrix. The protein is Cytochrome c oxidase subunit 5B, mitochondrial (COX5B) of Bos taurus (Bovine).